Here is a 123-residue protein sequence, read N- to C-terminus: MSWTYLCDAADVAPNSLKLVDANDIRVVVANYGSGFRAIPPICPHMEEPLDESGVIANCVLTCTKHLWAWNLISLELLGETEKPLKTYELKEEDGKLLAFIAEELTYDFEEEDDMDDDFFSKS.

The 96-residue stretch at 4–99 folds into the Rieske domain; it reads TYLCDAADVA…LKEEDGKLLA (96 aa). [2Fe-2S] cluster contacts are provided by Cys-43, His-45, Cys-63, and His-66.

This sequence belongs to the bacterial ring-hydroxylating dioxygenase ferredoxin component family. In terms of assembly, the MSA monooxygenase system consists of 4 proteins: the 2 subunits of the hydroxylase component (MsmA and MsmB), a ferredoxin (MsmC) and a ferredoxin reductase (MsmD). The ferredoxin component is dimeric. [2Fe-2S] cluster is required as a cofactor.

The protein resides in the cytoplasm. The enzyme catalyses methanesulfonate + NADH + O2 = sulfite + formaldehyde + NAD(+) + H2O. With respect to regulation, MSAMO is inhibited by metal chelators (such as bathophenanthroline, bathocuprione, neocuprione, alpha-alpha-dipyridil and sodium EDTA) and by sodium azide, sodium arsenate and potassium cyanide. Methanesulfonate monooxygenase (MSAMO) mediates the primary degradation of methanesulfonic acid (MSA) to produce formaldehyd and inorganic sulfite by initial hydroxylation of the carbon atom prior to spontaneous cleavage of the unstable hydroxymethanesulfonic acid. MSAMO has a restricted substrate range that includes only the short-chain aliphatic sulfonates (methane- to butanesulfonate) and excludes all larger molecules, such as arylsulfonates and aromatic sulfonates. All MSAMO components are required for enzyme activity. This is Methanesulfonate monooxygenase ferredoxin subunit from Methylosulfonomonas methylovora.